We begin with the raw amino-acid sequence, 727 residues long: Phenylalanine ammonia-lyase str11 (727 aa).

The active-site Proton donor/acceptor is the Y105. Positions 210-212 (ASG) form a cross-link, 5-imidazolinone (Ala-Gly). 2,3-didehydroalanine (Ser) is present on S211. 7 residues coordinate (E)-cinnamate: N271, Q361, R367, N397, K468, E496, and N499.

This sequence belongs to the PAL/histidase family. Post-translationally, contains an active site 4-methylidene-imidazol-5-one (MIO), which is formed autocatalytically by cyclization and dehydration of residues Ala-Ser-Gly.

The catalysed reaction is L-phenylalanine = (E)-cinnamate + NH4(+). It functions in the pathway mycotoxin biosynthesis. Phenylalanine ammonia-lyase; part of the gene cluster that mediates the biosynthesis of strobilurin A, an antifungal polyketide that contains a key beta-methoxyacrylate toxophore that targets the complex III of the mitochondrial electron transport chain. Strobilurin biosynthesis begins with construction of benzoyl CoA by step-wise elimination of ammonia from phenylalanine by the phenylalanine ammonia-lyase str11, oxygenation by str8 and retro-Claisen reaction to form benzoic acid, which is activated to its CoA thiolester benzoyl CoA by the dedicated CoA ligase str10. Benzoyl CoA forms the starter unit for the highly reducing polyketide synthase stpks1 that produces the polyketide prestrobilutin A. The FAD-dependent oxygenase str9 then catalyzes the key oxidative rearrangement responsible for the creation of the beta-methoxyacrylate toxophore. Str9 performs epoxidation of the 2,3 olefin of prestrobilutin A, followed by Meinwald rearrangement to furnish the aldehyde intermediate. Rapid enolization of the aldehyde intermediate would give the beta-methoxyacrylate skeleton and methylations catalyzed by str2 and str3 complete the synthesis and lead to the production of strobilurin A. The short-chain dehydrogenase stl2 and the dehydrogenase str4 play a role in the shunt pathway leading to the production of bolineol. The cluster encodes no obvious halogenase gene that could be involved in production of strobilurin B, nor any obvious dimethylallyl-transferase that could be involved in the production of strobilurin G. It is possible that unknown proteins encoded in, or near, the cluster (such as str1 or stl1) may form new classes of halogenases or dimethylally-transferases, or that the responsible genes are located elsewhere on the genome. Similarly, proteins encoded by str5/str6 hydrolases appear to have no chemical role in the biosynthesis of strobilurin A. Finally, no obvious self-resistance gene is found within the cluster. The sequence is that of Phenylalanine ammonia-lyase str11 from Strobilurus tenacellus.